Here is a 201-residue protein sequence, read N- to C-terminus: Imidazole glycerol phosphate synthase subunit HisH (201 aa).

The region spanning 2–201 is the Glutamine amidotransferase type-1 domain; it reads KVVILDTGCA…ARLLKNFLEM (200 aa). Cys77 acts as the Nucleophile in catalysis. Catalysis depends on residues His183 and Glu185.

In terms of assembly, heterodimer of HisH and HisF.

It is found in the cytoplasm. It carries out the reaction 5-[(5-phospho-1-deoxy-D-ribulos-1-ylimino)methylamino]-1-(5-phospho-beta-D-ribosyl)imidazole-4-carboxamide + L-glutamine = D-erythro-1-(imidazol-4-yl)glycerol 3-phosphate + 5-amino-1-(5-phospho-beta-D-ribosyl)imidazole-4-carboxamide + L-glutamate + H(+). It catalyses the reaction L-glutamine + H2O = L-glutamate + NH4(+). It participates in amino-acid biosynthesis; L-histidine biosynthesis; L-histidine from 5-phospho-alpha-D-ribose 1-diphosphate: step 5/9. Its function is as follows. IGPS catalyzes the conversion of PRFAR and glutamine to IGP, AICAR and glutamate. The HisH subunit catalyzes the hydrolysis of glutamine to glutamate and ammonia as part of the synthesis of IGP and AICAR. The resulting ammonia molecule is channeled to the active site of HisF. The polypeptide is Imidazole glycerol phosphate synthase subunit HisH (Photorhabdus laumondii subsp. laumondii (strain DSM 15139 / CIP 105565 / TT01) (Photorhabdus luminescens subsp. laumondii)).